Reading from the N-terminus, the 529-residue chain is MTLSPYLQEVAKRRTFAIISHPDAGKTTITEKVLLFGQAIQTAGTVKGRGSNQHAKSDWMEMEKQRGISITTSVMQFPYHDCLVNLLDTPGHEDFSEDTYRTLTAVDCCLMVIDAAKGVEDRTRKLMEVTRLRDTPILTFMNKLDRDIRDPMELLDEVENELKIGCAPITWPIGCGKLFKGVYHLYKDETYLYQSGKGHTIQEVRIVKGLNNPDLDAAVGEDLAQQLRDELELVKGASNEFDKELFLAGEITPVFFGTALGNFGVDHMLDGLVEWAPAPMPRQTDTRTVEASEDKFTGFVFKIQANMDPKHRDRVAFMRVVSGKYEKGMKLRQVRTAKDVVISDALTFMAGDRSHVEEAYPGDILGLHNHGTIQIGDTFTQGEMMKFTGIPNFAPELFRRIRLKDPLKQKQLLKGLVQLSEEGAVQVFRPISNNDLIVGAVGVLQFDVVVSRLKSEYSVEAVYESVNVATARWVECADAKKFEEFKRKNESQLALDGGDNLAYIATSMVNLRLAQERYPDVQFHQTREH.

The 270-residue stretch at 11 to 280 (AKRRTFAIIS…GLVEWAPAPM (270 aa)) folds into the tr-type G domain. Residues 20–27 (SHPDAGKT), 88–92 (DTPGH), and 142–145 (NKLD) contribute to the GTP site.

The protein belongs to the TRAFAC class translation factor GTPase superfamily. Classic translation factor GTPase family. PrfC subfamily.

It localises to the cytoplasm. Its function is as follows. Increases the formation of ribosomal termination complexes and stimulates activities of RF-1 and RF-2. It binds guanine nucleotides and has strong preference for UGA stop codons. It may interact directly with the ribosome. The stimulation of RF-1 and RF-2 is significantly reduced by GTP and GDP, but not by GMP. This Shigella sonnei (strain Ss046) protein is Peptide chain release factor 3.